The primary structure comprises 242 residues: Ribosomal RNA small subunit methyltransferase G (242 aa).

Residues glycine 79, phenylalanine 84, 130 to 131 (AE), and arginine 150 contribute to the S-adenosyl-L-methionine site.

Belongs to the methyltransferase superfamily. RNA methyltransferase RsmG family.

The protein resides in the cytoplasm. In terms of biological role, specifically methylates the N7 position of a guanine in 16S rRNA. This Levilactobacillus brevis (strain ATCC 367 / BCRC 12310 / CIP 105137 / JCM 1170 / LMG 11437 / NCIMB 947 / NCTC 947) (Lactobacillus brevis) protein is Ribosomal RNA small subunit methyltransferase G.